Here is a 243-residue protein sequence, read N- to C-terminus: tRNA pseudouridine synthase A (243 aa).

Residue D54 is the Nucleophile of the active site. Residue Y112 participates in substrate binding.

This sequence belongs to the tRNA pseudouridine synthase TruA family. In terms of assembly, homodimer.

It catalyses the reaction uridine(38/39/40) in tRNA = pseudouridine(38/39/40) in tRNA. In terms of biological role, formation of pseudouridine at positions 38, 39 and 40 in the anticodon stem and loop of transfer RNAs. The polypeptide is tRNA pseudouridine synthase A (Aster yellows witches'-broom phytoplasma (strain AYWB)).